The sequence spans 631 residues: Nucleoside triphosphatase I (631 aa).

The Helicase ATP-binding domain maps to 42-204 (FLGLDSMHSL…TMLVNLLRPG (163 aa)). Residue 55-62 (HETGVGKT) participates in ATP binding. The DEXH box motif lies at 141–144 (DECH). The Helicase C-terminal domain maps to 367–532 (KFIDVCLGIL…EFVQLFRVFK (166 aa)). The segment at 457–524 (DIFILDMTWN…EIIQSKSKEF (68 aa)) is binding to the cap-specific mRNA (nucleoside-2'-O-)-methyltransferase.

The protein belongs to the helicase family. NPH I subfamily. In terms of assembly, monomer. Interacts (via C-terminus) with RAP94/OPG109 (via N-terminus). Interacts with the cap-specific mRNA (nucleoside-2'-O-)-methyltransferase OPG102.

It localises to the virion. The enzyme catalyses a ribonucleoside 5'-triphosphate + H2O = a ribonucleoside 5'-diphosphate + phosphate + H(+). Its function is as follows. DNA-dependent ATPase that acts as a 5' to 3' translocase on single-stranded DNA and thereby plays a role in transcription termination of viral early genes. Uses forward translocation in concert with the viral RNA polymerase RAP94/OPG109 subunit and the capping enzyme/VTF to catalyze release of UUUUUNU-containing nascent RNA from the elongation complex. In addition, acts as a positive elongation factor to assist transcription through problematic sequences. The polypeptide is Nucleoside triphosphatase I (OPG123) (Variola virus (isolate Human/India/Ind3/1967) (VARV)).